The sequence spans 421 residues: Membrane-associated protein UidC (421 aa).

Residues 1–23 (MRKIVAMAVICLTAASGLTSAYA) form the signal peptide.

This sequence belongs to the outer membrane porin (Opr) (TC 1.B.25) family.

It localises to the cell outer membrane. Enhances the activity of the UidB (GusB) glucuronide transporter, on its own however it has no transport activity. Glucuronide transport does not occur in strain K12 due to a variant at position 100 of the UidB (GusB, AC P0CE44, AC P0CE45) protein. This is Membrane-associated protein UidC (uidC) from Escherichia coli (strain K12).